A 948-amino-acid chain; its full sequence is Isoleucine--tRNA ligase (948 aa).

Residues 58–68 (PYANGDIHIGH) carry the 'HIGH' region motif. Glutamate 566 contributes to the L-isoleucyl-5'-AMP binding site. Positions 607–611 (KMSKS) match the 'KMSKS' region motif. Lysine 610 is a binding site for ATP. 4 residues coordinate Zn(2+): cysteine 911, cysteine 914, cysteine 931, and cysteine 934.

Belongs to the class-I aminoacyl-tRNA synthetase family. IleS type 1 subfamily. Monomer. It depends on Zn(2+) as a cofactor.

It is found in the cytoplasm. It catalyses the reaction tRNA(Ile) + L-isoleucine + ATP = L-isoleucyl-tRNA(Ile) + AMP + diphosphate. Its function is as follows. Catalyzes the attachment of isoleucine to tRNA(Ile). As IleRS can inadvertently accommodate and process structurally similar amino acids such as valine, to avoid such errors it has two additional distinct tRNA(Ile)-dependent editing activities. One activity is designated as 'pretransfer' editing and involves the hydrolysis of activated Val-AMP. The other activity is designated 'posttransfer' editing and involves deacylation of mischarged Val-tRNA(Ile). In Vibrio vulnificus (strain CMCP6), this protein is Isoleucine--tRNA ligase.